The primary structure comprises 827 residues: Periplasmic nitrate reductase (827 aa).

The tat-type signal signal peptide spans 1 to 32 (MNLSRRDFMKANAALAAASVAGLIIPVKNVNA). One can recognise a 4Fe-4S Mo/W bis-MGD-type domain in the interval 37–93 (ITWDKAVCRFCGTGCAVLVGTKDGRVVASQGDPDAEVNRGLNCIKGYFLPKIMYGKD). [4Fe-4S] cluster is bound by residues Cys44, Cys47, Cys51, and Cys79. Mo-bis(molybdopterin guanine dinucleotide)-binding positions include Lys81, Gln148, Asn173, Cys177, 210 to 217 (WGSNMAEM), 242 to 246 (STFEH), 261 to 263 (QSD), Met372, Gln376, Asn482, 508 to 509 (SD), Lys531, Asp558, and 717 to 726 (TGRILEHWHT). Phe793 serves as a coordination point for substrate. 2 residues coordinate Mo-bis(molybdopterin guanine dinucleotide): Asn801 and Lys818.

This sequence belongs to the prokaryotic molybdopterin-containing oxidoreductase family. NasA/NapA/NarB subfamily. As to quaternary structure, component of the periplasmic nitrate reductase NapAB complex composed of NapA and NapB. Requires [4Fe-4S] cluster as cofactor. Mo-bis(molybdopterin guanine dinucleotide) serves as cofactor. In terms of processing, predicted to be exported by the Tat system. The position of the signal peptide cleavage has not been experimentally proven.

It localises to the periplasm. The enzyme catalyses 2 Fe(II)-[cytochrome] + nitrate + 2 H(+) = 2 Fe(III)-[cytochrome] + nitrite + H2O. Catalytic subunit of the periplasmic nitrate reductase complex NapAB. Receives electrons from NapB and catalyzes the reduction of nitrate to nitrite. The chain is Periplasmic nitrate reductase from Histophilus somni (strain 2336) (Haemophilus somnus).